We begin with the raw amino-acid sequence, 79 residues long: Cell division protein ZapB (79 aa).

The stretch at 1–78 (MSLEALDQLQ…LNSLLGKMDD (78 aa)) forms a coiled coil.

Belongs to the ZapB family. As to quaternary structure, homodimer. The ends of the coiled-coil dimer bind to each other, forming polymers. Interacts with FtsZ.

The protein resides in the cytoplasm. Functionally, non-essential, abundant cell division factor that is required for proper Z-ring formation. It is recruited early to the divisome by direct interaction with FtsZ, stimulating Z-ring assembly and thereby promoting cell division earlier in the cell cycle. Its recruitment to the Z-ring requires functional FtsA or ZipA. The sequence is that of Cell division protein ZapB from Hamiltonella defensa subsp. Acyrthosiphon pisum (strain 5AT).